Reading from the N-terminus, the 132-residue chain is Small ribosomal subunit protein uS8 (132 aa).

The protein belongs to the universal ribosomal protein uS8 family. As to quaternary structure, part of the 30S ribosomal subunit. Contacts proteins S5 and S12.

Its function is as follows. One of the primary rRNA binding proteins, it binds directly to 16S rRNA central domain where it helps coordinate assembly of the platform of the 30S subunit. In Coprothermobacter proteolyticus (strain ATCC 35245 / DSM 5265 / OCM 4 / BT), this protein is Small ribosomal subunit protein uS8.